Consider the following 158-residue polypeptide: CD-NTase/cGAS isopeptidase (158 aa).

Catalysis depends on Glu38, which acts as the Proton donor/acceptor. Zn(2+) is bound by residues His100, His102, and Asp113.

The protein belongs to the peptidase M67B family. Cap3 isopeptidase subfamily.

Its function is as follows. Metalloprotease priming reversal component of a CBASS antivirus system. CBASS (cyclic oligonucleotide-based antiphage signaling system) provides immunity against bacteriophages. The CD-NTase protein synthesizes cyclic nucleotides in response to infection; these serve as specific second messenger signals. The signals activate a diverse range of effectors, leading to bacterial cell death and thus abortive phage infection. A type II-A(GA) CBASS system. Reverses the primed state of CdnA, the CD-NTase. Functionally, the capV-cdnA-cap2-cap3 operon provides about 10(4)-fold protection in strain BWHPSA011 against infection by phage PaMx41. In P.aeruginosa strain PAO1 it confers protection against phages PaMx41 and JBD18 but not JBD67 (JBD18 and JBD67 do not replicate in BWHPSA011 / Pa011). When acb2 in JBD67 is deleted this CBASS operon then protects against JDB67 also. This CBASS system limits prophage induction of lysogenized JBD67 as well as viral lytic replication. This chain is CD-NTase/cGAS isopeptidase, found in Pseudomonas aeruginosa (strain BWHPSA011 / Pa011).